A 360-amino-acid chain; its full sequence is Peptide chain release factor 1 (360 aa).

N5-methylglutamine is present on Q235. A disordered region spans residues 284–304 (KVDSERSADRKSQVGSGDRSE).

It belongs to the prokaryotic/mitochondrial release factor family. Methylated by PrmC. Methylation increases the termination efficiency of RF1.

It localises to the cytoplasm. Functionally, peptide chain release factor 1 directs the termination of translation in response to the peptide chain termination codons UAG and UAA. This Agrobacterium fabrum (strain C58 / ATCC 33970) (Agrobacterium tumefaciens (strain C58)) protein is Peptide chain release factor 1.